The primary structure comprises 456 residues: O-phospho-L-seryl-tRNA:Cys-tRNA synthase 2 (456 aa).

Residues 146–147 (AR), N251, and 274–276 (SGH) contribute to the pyridoxal 5'-phosphate site. N6-(pyridoxal phosphate)lysine is present on K277.

Belongs to the SepCysS family. In terms of assembly, homodimer. Interacts with SepRS. The cofactor is pyridoxal 5'-phosphate.

It carries out the reaction O-phospho-L-seryl-tRNA(Cys) + hydrogen sulfide + H(+) = L-cysteinyl-tRNA(Cys) + phosphate. Functionally, converts O-phospho-L-seryl-tRNA(Cys) (Sep-tRNA(Cys)) to L-cysteinyl-tRNA(Cys) (Cys-tRNA(Cys)). This chain is O-phospho-L-seryl-tRNA:Cys-tRNA synthase 2, found in Methanospirillum hungatei JF-1 (strain ATCC 27890 / DSM 864 / NBRC 100397 / JF-1).